We begin with the raw amino-acid sequence, 1264 residues long: Ubiquitin carboxyl-terminal hydrolase usp-48 (1264 aa).

The USP domain maps to alanine 108 to arginine 430. Cysteine 117 serves as the catalytic Nucleophile. Residue histidine 366 is the Proton acceptor of the active site. 3 disordered regions span residues isoleucine 390–tyrosine 415, alanine 522–threonine 610, and threonine 630–serine 679. Composition is skewed to basic and acidic residues over residues lysine 403–tyrosine 415 and glutamate 532–glutamate 543. Residues alanine 516–alanine 547 are a coiled coil. The segment covering serine 565–glutamate 575 has biased composition (low complexity). 2 stretches are compositionally biased toward polar residues: residues glutamate 587–valine 599 and asparagine 663–serine 678.

This sequence belongs to the peptidase C19 family. In terms of tissue distribution, broadly expressed. Expressed in germline.

It is found in the nucleus. The protein resides in the chromosome. It catalyses the reaction Thiol-dependent hydrolysis of ester, thioester, amide, peptide and isopeptide bonds formed by the C-terminal Gly of ubiquitin (a 76-residue protein attached to proteins as an intracellular targeting signal).. In terms of biological role, recognizes and hydrolyzes the peptide bond at the C-terminal Gly of ubiquitin. Involved in the processing of poly-ubiquitin precursors as well as that of ubiquitinated proteins. Required post-developmentally to restrict the plasticity of epidermal cells, probably by regulating gene expression. This is Ubiquitin carboxyl-terminal hydrolase usp-48 from Caenorhabditis elegans.